Reading from the N-terminus, the 441-residue chain is D-aminoacyl-tRNA deacylase (441 aa).

It belongs to the DtdA deacylase family. Monomer. It depends on Zn(2+) as a cofactor.

The catalysed reaction is a D-aminoacyl-tRNA + H2O = a tRNA + a D-alpha-amino acid + H(+). It carries out the reaction glycyl-tRNA(Ala) + H2O = tRNA(Ala) + glycine + H(+). In terms of biological role, D-aminoacyl-tRNA deacylase with broad substrate specificity. By recycling D-aminoacyl-tRNA to D-amino acids and free tRNA molecules, this enzyme counteracts the toxicity associated with the formation of D-aminoacyl-tRNA entities in vivo. This is D-aminoacyl-tRNA deacylase from Natronomonas pharaonis (strain ATCC 35678 / DSM 2160 / CIP 103997 / JCM 8858 / NBRC 14720 / NCIMB 2260 / Gabara) (Halobacterium pharaonis).